Here is a 342-residue protein sequence, read N- to C-terminus: Dihydroorotase (342 aa).

Residues His13 and His15 each coordinate Zn(2+). Residues His15–Arg17 and Asn41 contribute to the substrate site. Residues Lys97, His134, and His172 each contribute to the Zn(2+) site. An N6-carboxylysine modification is found at Lys97. His134 contributes to the substrate binding site. Residue Leu217 participates in substrate binding. Residue Asp245 coordinates Zn(2+). Residue Asp245 is part of the active site. 2 residues coordinate substrate: His249 and Ala261.

Belongs to the metallo-dependent hydrolases superfamily. DHOase family. Class II DHOase subfamily. In terms of assembly, homodimer. Zn(2+) serves as cofactor.

It catalyses the reaction (S)-dihydroorotate + H2O = N-carbamoyl-L-aspartate + H(+). Its pathway is pyrimidine metabolism; UMP biosynthesis via de novo pathway; (S)-dihydroorotate from bicarbonate: step 3/3. Its function is as follows. Catalyzes the reversible cyclization of carbamoyl aspartate to dihydroorotate. This Shewanella loihica (strain ATCC BAA-1088 / PV-4) protein is Dihydroorotase.